The primary structure comprises 96 residues: MLMMFYWSLPCFLFLMGVFVFVSNRKHLLSMLLSLEYIVLNLFFLLYIYLNLMEYLSFLGMMFLTFSVCEGALGLSIMVSMIRTHGNDYFQSFNVL.

3 consecutive transmembrane segments (helical) span residues 2-22, 28-48, and 58-78; these read LMMFYWSLPCFLFLMGVFVFV, LLSMLLSLEYIVLNLFFLLYI, and FLGMMFLTFSVCEGALGLSIM.

This sequence belongs to the complex I subunit 4L family.

The protein resides in the mitochondrion membrane. The catalysed reaction is a ubiquinone + NADH + 5 H(+)(in) = a ubiquinol + NAD(+) + 4 H(+)(out). Its function is as follows. Core subunit of the mitochondrial membrane respiratory chain NADH dehydrogenase (Complex I) that is believed to belong to the minimal assembly required for catalysis. Complex I functions in the transfer of electrons from NADH to the respiratory chain. The immediate electron acceptor for the enzyme is believed to be ubiquinone. The chain is NADH-ubiquinone oxidoreductase chain 4L (ND4L) from Ceratitis capitata (Mediterranean fruit fly).